Reading from the N-terminus, the 296-residue chain is Cytidine deaminase (296 aa).

CMP/dCMP-type deaminase domains are found at residues 47 to 167 (EESE…FGPS) and 186 to 296 (DSSD…IDPA). 88–90 (NLE) contacts substrate. His-101 is a binding site for Zn(2+). Glu-103 serves as the catalytic Proton donor. Residues Cys-128 and Cys-131 each coordinate Zn(2+).

Belongs to the cytidine and deoxycytidylate deaminase family. As to quaternary structure, homodimer. The cofactor is Zn(2+).

The enzyme catalyses cytidine + H2O + H(+) = uridine + NH4(+). It catalyses the reaction 2'-deoxycytidine + H2O + H(+) = 2'-deoxyuridine + NH4(+). In terms of biological role, this enzyme scavenges exogenous and endogenous cytidine and 2'-deoxycytidine for UMP synthesis. This chain is Cytidine deaminase, found in Shewanella woodyi (strain ATCC 51908 / MS32).